Here is a 437-residue protein sequence, read N- to C-terminus: O-methyltransferase elcB (437 aa).

Aspartate 269 contacts S-adenosyl-L-methionine. The active-site Proton acceptor is histidine 319.

Belongs to the class I-like SAM-binding methyltransferase superfamily. Cation-independent O-methyltransferase family. COMT subfamily.

It functions in the pathway secondary metabolite biosynthesis. O-methyltransferase; part of the gene cluster that mediates the biosynthesis of elsinochrome C, a perelyenequinone phytotoxin structurally similar to cercosporin. The first step of elsinochrome C biosynthesis is performed by the polyketide synthase elcA which catalyzes the formation of nor-toralactone. The starter unit acyltransferase (SAT) domain of elcA initiates polyketide extension by the selective utilization of acetyl-CoA, which is elongated to the heptaketide in the beta-ketoacyl synthase (KS) domain by successive condensations with six malonyl units introduced by the malonyl acyltransferase (MAT) domain. The product template (PT) domain catalyzes C4-C9 and C2-C11 aldol cyclizations and dehydrations to a trihydroxynaphthalene, which is thought to be delivered to the thioesterase (TE) domain for product release. The bifunctional enzyme elcB then methylates nor-toralactone to toralactone before conducting an unusual oxidative aromatic ring opening. The next step in perylenequinone biosynthesis is an O-methylation at the nascent OH-6 of the elcB product performed by the O-methyltransferase elcD. The oxidative coupling of the two monomeric naphthol units in perylenequinone biosynthesis is catalyzed by the FAD-dependent monooxygenase elcE and the multicopper oxidase elcG. ElcG might catalyze the first intermolecular coupling in a regio- and stereo-selective manner via a phenol radical coupling mechanism and the elcE could forge the second C-C bond intramolecularly via a hydride transfer mechanism. The fasciclin domain-containing protein elcF might also play a role duting this step. The last piece of the puzzle in the biosynthesis of elsinochrome C is the additional annulation by enolate coupling to afford the dihydrobenzo(ghi)perylenequinone system, catalyzed by the FAD-dependent monooxygenase elcH. The sequence is that of O-methyltransferase elcB from Phaeosphaeria nodorum (strain SN15 / ATCC MYA-4574 / FGSC 10173) (Glume blotch fungus).